The chain runs to 699 residues: Elongation factor G (699 aa).

One can recognise a tr-type G domain in the interval 8–283 (EHIRNIGICA…AVVDFLPSPI (276 aa)). GTP is bound by residues 17–24 (AHIDAGKT), 81–85 (DTPGH), and 135–138 (NKMD).

Belongs to the TRAFAC class translation factor GTPase superfamily. Classic translation factor GTPase family. EF-G/EF-2 subfamily.

It is found in the cytoplasm. Catalyzes the GTP-dependent ribosomal translocation step during translation elongation. During this step, the ribosome changes from the pre-translocational (PRE) to the post-translocational (POST) state as the newly formed A-site-bound peptidyl-tRNA and P-site-bound deacylated tRNA move to the P and E sites, respectively. Catalyzes the coordinated movement of the two tRNA molecules, the mRNA and conformational changes in the ribosome. The polypeptide is Elongation factor G (Rickettsia rickettsii).